Consider the following 65-residue polypeptide: Large ribosomal subunit protein uL29 (65 aa).

Belongs to the universal ribosomal protein uL29 family.

The protein is Large ribosomal subunit protein uL29 of Desulforamulus reducens (strain ATCC BAA-1160 / DSM 100696 / MI-1) (Desulfotomaculum reducens).